The primary structure comprises 109 residues: Cell division protein ZapA (109 aa).

Residues 21-97 (PEQQEALNQA…QTIEQALVEQ (77 aa)) are a coiled coil.

This sequence belongs to the ZapA family. Type 1 subfamily. Homodimer. Interacts with FtsZ.

The protein localises to the cytoplasm. Functionally, activator of cell division through the inhibition of FtsZ GTPase activity, therefore promoting FtsZ assembly into bundles of protofilaments necessary for the formation of the division Z ring. It is recruited early at mid-cell but it is not essential for cell division. The sequence is that of Cell division protein ZapA from Sodalis glossinidius (strain morsitans).